The following is a 318-amino-acid chain: L-lactate dehydrogenase (318 aa).

NAD(+) is bound by residues Val-15, Asp-36, and Lys-41. Arg-89 serves as a coordination point for substrate. Residues Ser-102, 119–121, and Thr-144 each bind NAD(+); that span reads ITN. 121-124 is a binding site for substrate; that stretch reads NPVD. A substrate-binding site is contributed by 149 to 152; it reads DSAR. His-176 (proton acceptor) is an active-site residue. Thr-231 is a binding site for substrate.

It belongs to the LDH/MDH superfamily. LDH family. In terms of assembly, homotetramer.

The protein resides in the cytoplasm. It catalyses the reaction (S)-lactate + NAD(+) = pyruvate + NADH + H(+). It participates in fermentation; pyruvate fermentation to lactate; (S)-lactate from pyruvate: step 1/1. In terms of biological role, catalyzes the conversion of lactate to pyruvate. The sequence is that of L-lactate dehydrogenase from Fusobacterium nucleatum subsp. nucleatum (strain ATCC 25586 / DSM 15643 / BCRC 10681 / CIP 101130 / JCM 8532 / KCTC 2640 / LMG 13131 / VPI 4355).